The primary structure comprises 110 residues: ATP-dependent Clp protease adapter protein ClpS (110 aa).

Belongs to the ClpS family. Binds to the N-terminal domain of the chaperone ClpA.

Its function is as follows. Involved in the modulation of the specificity of the ClpAP-mediated ATP-dependent protein degradation. This is ATP-dependent Clp protease adapter protein ClpS from Bartonella quintana (strain Toulouse) (Rochalimaea quintana).